A 117-amino-acid chain; its full sequence is Large ribosomal subunit protein bL19 (117 aa).

This sequence belongs to the bacterial ribosomal protein bL19 family.

Functionally, this protein is located at the 30S-50S ribosomal subunit interface and may play a role in the structure and function of the aminoacyl-tRNA binding site. This chain is Large ribosomal subunit protein bL19, found in Shewanella baltica (strain OS155 / ATCC BAA-1091).